Here is a 387-residue protein sequence, read N- to C-terminus: Cytochrome b (387 aa).

Residues 32 to 52 (LGSLLGLCLVIQIASGVFLAM) traverse the membrane as a helical segment. The heme b site is built by His82 and His96. 8 consecutive transmembrane segments (helical) span residues 85 to 105 (GASFFFICMYLHIGKALYYGS), 116 to 136 (IGVVIFILTMAIAFMGYCLVY), 151 to 171 (LSAIPFIGNDIVPFIWGGFSV), 179 to 199 (FFALHFLLPFILAALVCMHLM), 225 to 245 (FIFKDLITVFVFLLIFSLFVF), 289 to 309 (LGGVIAMFGAILILLSLPYTD), 324 to 344 (LAFYLFVFNFILLGNLGQLHV), and 350 to 370 (QLGQFATAYYFAHYIIVVPVI). The heme b site is built by His183 and His197.

This sequence belongs to the cytochrome b family. As to quaternary structure, component of the ubiquinol-cytochrome c oxidoreductase (cytochrome b-c1 complex, complex III, CIII), a multisubunit enzyme composed of 10 subunits. The complex is composed of 3 respiratory subunits cytochrome b (COB), cytochrome c1 (CYT1) and Rieske protein (RIP1), 2 core protein subunits COR1 and QCR2, and 5 low-molecular weight protein subunits QCR6, QCR7, QCR8, QCR9 and QCR10. The complex exists as an obligatory dimer and forms supercomplexes (SCs) in the inner mitochondrial membrane with a monomer or a dimer of cytochrome c oxidase (complex IV, CIV), resulting in 2 different assemblies (supercomplexes III(2)IV and III(2)IV(2)). Requires heme b as cofactor.

Its subcellular location is the mitochondrion inner membrane. Functionally, component of the ubiquinol-cytochrome c oxidoreductase, a multisubunit transmembrane complex that is part of the mitochondrial electron transport chain which drives oxidative phosphorylation. The complex plays an important role in the uptake of multiple carbon sources present in different host niches. The chain is Cytochrome b from Candida albicans (strain SC5314 / ATCC MYA-2876) (Yeast).